Here is a 239-residue protein sequence, read N- to C-terminus: Ribonuclease 3 (239 aa).

The region spanning 11 to 133 is the RNase III domain; that stretch reads HTAIQKKLGY…MFAAVSFDAD (123 aa). Glutamate 46 provides a ligand contact to Mg(2+). The active site involves aspartate 50. 2 residues coordinate Mg(2+): aspartate 119 and glutamate 122. Glutamate 122 is a catalytic residue. A DRBM domain is found at 160–230; it reads DGKTALQEAL…AKEALKWLEE (71 aa).

Belongs to the ribonuclease III family. As to quaternary structure, homodimer. Requires Mg(2+) as cofactor.

Its subcellular location is the cytoplasm. It carries out the reaction Endonucleolytic cleavage to 5'-phosphomonoester.. Functionally, digests double-stranded RNA. Involved in the processing of primary rRNA transcript to yield the immediate precursors to the large and small rRNAs (23S and 16S). Processes some mRNAs, and tRNAs when they are encoded in the rRNA operon. Processes pre-crRNA and tracrRNA of type II CRISPR loci if present in the organism. This chain is Ribonuclease 3, found in Neisseria gonorrhoeae (strain ATCC 700825 / FA 1090).